Consider the following 351-residue polypeptide: MAVSRAPAPDSACQRMVWLFPLVFCLGSGSEVSQSSSDPQLMNGVLGESAVLPLKLPAGKIANIIIWNYEWEASQVTALVINLSNPESPQIMNTDVKKRLNITQSYSLQISNLTMADTGSYTAQITTKDSEVITFKYILRVFERLGNLETTNYTLLLENGTCQIHLACVLKNQSQTVSVEWQATGNISLGGPNVTIFWDPRNSGDQTYVCRAKNAVSNLSVSVSTQSLCKGVLTNPPWNAVWFMTTISIISAVILIFVCWSIHVWKRRGSLPLTSQHPESSQSTDGPGSPGNTVYAQVTRPMQEMKIPKPIKNDSMTIYSIVNHSREETVALTGYNQPITLKVNTLINYNS.

Residues 1-30 form the signal peptide; that stretch reads MAVSRAPAPDSACQRMVWLFPLVFCLGSGS. Topologically, residues 31 to 239 are extracellular; that stretch reads EVSQSSSDPQ…KGVLTNPPWN (209 aa). An Ig-like V-type domain is found at 36–130; sequence SSDPQLMNGV…YTAQITTKDS (95 aa). Asn82, Asn101, Asn112, Asn152, Asn159, Asn172, Asn186, Asn193, and Asn218 each carry an N-linked (GlcNAc...) asparagine glycan. Positions 147–210 constitute an Ig-like C2-type domain; it reads NLETTNYTLL…RNSGDQTYVC (64 aa). 2 cysteine pairs are disulfide-bonded: Cys162–Cys229 and Cys168–Cys210. The helical transmembrane segment at 240–262 threads the bilayer; the sequence is AVWFMTTISIISAVILIFVCWSI. The Cytoplasmic portion of the chain corresponds to 263–351; it reads HVWKRRGSLP…KVNTLINYNS (89 aa). Residues 272-295 are disordered; it reads PLTSQHPESSQSTDGPGSPGNTVY. 2 short sequence motifs (ITSM) span residues 293–298 and 317–322; these read TVYAQV and TIYSIV. Tyr319 bears the Phosphotyrosine mark.

Homodimer. Interacts with PTN6 and, upon phosphorylation, with PTN11 and SH2D1A/SAP. Phosphorylated. In terms of tissue distribution, expressed on hematopoietic cells. Isoform 3 is expressed in thymocytes and B lymphocytes of C57Bl/6 strain.

The protein resides in the cell membrane. In terms of biological role, self-ligand receptor of the signaling lymphocytic activation molecule (SLAM) family. SLAM receptors triggered by homo- or heterotypic cell-cell interactions are modulating the activation and differentiation of a wide variety of immune cells and thus are involved in the regulation and interconnection of both innate and adaptive immune response. Activities are controlled by presence or absence of small cytoplasmic adapter proteins, SH2D1A/SAP and/or SH2D1B/EAT-2. Triggers cytolytic activity only in natural killer cells (NK) expressing high surface densities of natural cytotoxicity receptors. Positive signaling in NK cells implicates phosphorylation of VAV1. NK cell activation seems to depend on SH2D1B and not on SH2D1A. In conjunction with SLAMF1 controls the transition between positive selection and the subsequent expansion and differentiation of the thymocytic natural killer T (NKT) cell lineage. Promotes T cell differentiation into a helper T-cell Th17 phenotype leading to increased IL-17 secretion; the costimulatory activity requires SH2D1A. Promotes recruitment of RORC to the IL-17 promoter. In conjunction with SLAMF1 and CD84/SLAMF5 may be a negative regulator of the humoral immune response. In the absence of SH2D1A/SAP can transmit negative signals to CD4(+) T-cells and NKT cells. Negatively regulates germinal center formation by inhibiting T-cell:B-cell adhesion; the function probably implicates increased association with PTPN6/SHP-1 via ITSMs in absence of SH2D1A/SAP. However, reported to mediated T-cell adhesion, to participate in stable T-cell:B-cell interactions and to be involved in maintaining B-cell tolerance in germinal centers and in preventing autoimmunity. Involved in regulation of autoimmunity. Isoform 3 may be suppressor of pathogenic T-cell proliferation. In Mus musculus (Mouse), this protein is SLAM family member 6 (Slamf6).